The sequence spans 779 residues: MYVEAVRWQRSAASRDVLADYDEQAVTVAPRKREAAGVRAVMVSLQRGMQQMGALRTAAALARLNQRNGFDCPGCAWPEEPGGRKLAEFCENGAKAVAEEATKRTVTAEFFARHSVAELSAKPEYWLSQQGRLAHPMVLRPGDDHYRPISWDAAYQLIAEQLNGLDSPDRAVFYTSGRTSNEAAFCYQLLVRSFGTNNLPDCSNMCHESSGAALTDSIGIGKGSVTIGDVEHADLIVIAGQNPGTNHPRMLSVLGKAKANGAKIIAVNPLPEAGLIRFKDPQKVNGVVGHGIPIADEFVQIRLGGDMALFAGLGRLLLEAEERVPGSVVDRSFVDNHCAGFDGYRRRTLQVGLDTVMDATGIELAQLQRVAAMLMASQRTVICWAMGLTQHAHAVATIGEVTNVLLLRGMIGKPGAGVCPVRGHSNVQGDRTMGIWEKMPEQFLAALDREFGITSPRAHGFDTVAAIRAMRDGRVSVFMGMGGNFASATPDTAVTEAALRRCALTVQVSTKLNRSHLVHGATALILPTLGRTDRDTRNGRKQLVSVEDSMSMVHLSRGSLHPPSDQVRSEVQIICQLARALFGPGHPVPWERFADDYDTIRDAIAAVVPGCDDYNHKVRVPDGFQLPHPPRDAREFRTSTGKANFAVNPLQWVPVPPGRLVLQTLRSHDQYNTTIYGLDDRYRGVKGGRRVVFINPADIETFGLTAGDRVDLVSEWTDGQGGLQERRAKDFLVVAYSTPVGNAAAYYPETNPLVPLDHTAAQSNTPVSKAIIVRLEPTA.

Residues Cys-72 and Cys-75 each coordinate [4Fe-4S] cluster.

The protein belongs to the prokaryotic molybdopterin-containing oxidoreductase family. The cofactor is [4Fe-4S] cluster. It depends on Mo-bis(molybdopterin guanine dinucleotide) as a cofactor.

This is an uncharacterized protein from Mycobacterium bovis (strain ATCC BAA-935 / AF2122/97).